Here is a 1423-residue protein sequence, read N- to C-terminus: DNA-directed RNA polymerase subunit beta' (1423 aa).

Zn(2+) is bound by residues C71, C73, C86, and C89. D461, D463, and D465 together coordinate Mg(2+). Zn(2+) is bound by residues C815, C889, C896, and C899.

Belongs to the RNA polymerase beta' chain family. As to quaternary structure, the RNAP catalytic core consists of 2 alpha, 1 beta, 1 beta' and 1 omega subunit. When a sigma factor is associated with the core the holoenzyme is formed, which can initiate transcription. Mg(2+) is required as a cofactor. Requires Zn(2+) as cofactor.

It carries out the reaction RNA(n) + a ribonucleoside 5'-triphosphate = RNA(n+1) + diphosphate. Its function is as follows. DNA-dependent RNA polymerase catalyzes the transcription of DNA into RNA using the four ribonucleoside triphosphates as substrates. In Actinobacillus pleuropneumoniae serotype 3 (strain JL03), this protein is DNA-directed RNA polymerase subunit beta'.